Consider the following 2211-residue polypeptide: Activating signal cointegrator 1 complex subunit 3 (2211 aa).

One can recognise a Helicase ATP-binding 1 domain in the interval 495 to 678 (ETAYNTNENM…FLHVNPYIGL (184 aa)). 508 to 515 (APTGAGKT) lines the ATP pocket. Residues 620-623 (DEVH) carry the DEVH box motif. The Helicase C-terminal 1 domain maps to 717-923 (VLKQIMAGHQ…GTVTNVEEAV (207 aa)). The SEC63 1 domain maps to 987-1296 (STDLGRTASH…GAEAVCIINF (310 aa)). Residues 1345-1520 (HTLYHTDCNV…WLNINQMGLF (176 aa)) enclose the Helicase ATP-binding 2 domain. 1358 to 1365 (APTGSGKT) contributes to the ATP binding site. Residues 1462-1465 (DEIH) carry the DEIH box motif. The Helicase C-terminal 2 domain occupies 1553–1760 (PAFQAIRSHS…GTITSKQDAM (208 aa)). The region spanning 1821–2184 (PLTYGRIASY…YLGMDQQYDI (364 aa)) is the SEC63 2 domain.

It belongs to the helicase family.

It is found in the nucleus. Its subcellular location is the nucleus speckle. The protein localises to the cytoplasm. The protein resides in the cytosol. It carries out the reaction Couples ATP hydrolysis with the unwinding of duplex DNA by translocating in the 3'-5' direction.. The catalysed reaction is ATP + H2O = ADP + phosphate + H(+). In terms of biological role, 3'-5' DNA helicase involved in repair of alkylated DNA. Promotes DNA unwinding to generate single-stranded substrate needed for ALKBH3, enabling ALKBH3 to process alkylated N3-methylcytosine (3mC) within double-stranded regions. Also involved in activation of the ribosome quality control (RQC) pathway, a pathway that degrades nascent peptide chains during problematic translation. Drives the splitting of stalled ribosomes. This Gallus gallus (Chicken) protein is Activating signal cointegrator 1 complex subunit 3 (ascc3).